We begin with the raw amino-acid sequence, 449 residues long: Glucose-6-phosphate isomerase (449 aa).

At Thr-38 the chain carries Phosphothreonine. The Proton donor role is filled by Glu-290. Residues His-311 and Lys-425 contribute to the active site.

It belongs to the GPI family.

The protein resides in the cytoplasm. The enzyme catalyses alpha-D-glucose 6-phosphate = beta-D-fructose 6-phosphate. It functions in the pathway carbohydrate biosynthesis; gluconeogenesis. The protein operates within carbohydrate degradation; glycolysis; D-glyceraldehyde 3-phosphate and glycerone phosphate from D-glucose: step 2/4. In terms of biological role, catalyzes the reversible isomerization of glucose-6-phosphate to fructose-6-phosphate. This chain is Glucose-6-phosphate isomerase, found in Geobacillus thermodenitrificans (strain NG80-2).